The primary structure comprises 401 residues: Anhydro-N-acetylmuramic acid kinase (401 aa).

ATP is bound at residue 25–32 (GTSLDGLD).

This sequence belongs to the anhydro-N-acetylmuramic acid kinase family.

It carries out the reaction 1,6-anhydro-N-acetyl-beta-muramate + ATP + H2O = N-acetyl-D-muramate 6-phosphate + ADP + H(+). It functions in the pathway amino-sugar metabolism; 1,6-anhydro-N-acetylmuramate degradation. It participates in cell wall biogenesis; peptidoglycan recycling. In terms of biological role, catalyzes the specific phosphorylation of 1,6-anhydro-N-acetylmuramic acid (anhMurNAc) with the simultaneous cleavage of the 1,6-anhydro ring, generating MurNAc-6-P. Is required for the utilization of anhMurNAc either imported from the medium or derived from its own cell wall murein, and thus plays a role in cell wall recycling. This Pseudoalteromonas atlantica (strain T6c / ATCC BAA-1087) protein is Anhydro-N-acetylmuramic acid kinase.